A 2455-amino-acid chain; its full sequence is Ectopic P granules protein 5 homolog (2455 aa).

Positions 1–42 (MATLEKPKKEKSKKSRNRVPIEKEEEEPAELSTSEEQRPAEN) are disordered. Ser-44 bears the Phosphoserine mark. Residues 77–105 (VTSQEPEGTQEPTETEAQPSAPSAPPSTT) are disordered. Over residues 80–97 (QEPEGTQEPTETEAQPSA) the composition is skewed to low complexity. Ser-467 carries the phosphoserine modification.

The protein belongs to the EPG5 family.

The protein localises to the cytoplasm. It localises to the perinuclear region. The protein resides in the lysosome. Involved in autophagy. Plays a role in late steps of autophagy. In Drosophila melanogaster (Fruit fly), this protein is Ectopic P granules protein 5 homolog.